A 161-amino-acid polypeptide reads, in one-letter code: Protein-export protein SecB (161 aa).

Belongs to the SecB family. As to quaternary structure, homotetramer, a dimer of dimers. One homotetramer interacts with 1 SecA dimer.

It is found in the cytoplasm. Its function is as follows. One of the proteins required for the normal export of preproteins out of the cell cytoplasm. It is a molecular chaperone that binds to a subset of precursor proteins, maintaining them in a translocation-competent state. It also specifically binds to its receptor SecA. The protein is Protein-export protein SecB of Shewanella baltica (strain OS155 / ATCC BAA-1091).